A 334-amino-acid polypeptide reads, in one-letter code: NADH dehydrogenase (ubiquinone) complex I, assembly factor 6 homolog (334 aa).

Residues 1 to 11 constitute a mitochondrion transit peptide; the sequence is MRRLVRNWNCR.

The protein belongs to the NDUFAF6 family. Associates with mitochondrial complex I assembly intermediates during its biogenesis. Forms a complex including sicily, ND-42 and Hsp83; the complex is necessary to chaperone ND-42 in the cytoplasm before mitochondrial import; the interaction between sicily and ND-42 is direct and occurs preferably between the unprocessed forms in the cytoplasm; the interaction with Hsp83 is direct. Interacts with ND-30; interaction is stronger between the unprocessed forms in the cytoplasm. In terms of tissue distribution, expressed in the ventral nerve cord, larval brain, motor neuron axons, imaginal disks, and muscles (at protein level).

The protein localises to the mitochondrion inner membrane. The protein resides in the cytoplasm. Its subcellular location is the cytosol. Its function is as follows. Involved in the assembly of mitochondrial NADH:ubiquinone oxidoreductase complex (Complex I) at early stages. Interacts with cytosolic Hsp90 to chaperone the Complex I subunit ND-42 in the cytoplasm. The sequence is that of NADH dehydrogenase (ubiquinone) complex I, assembly factor 6 homolog from Drosophila melanogaster (Fruit fly).